A 291-amino-acid polypeptide reads, in one-letter code: Phycobilisome 32.1 kDa linker polypeptide, phycocyanin-associated, rod 1 (291 aa).

The 178-residue stretch at 2–179 folds into the PBS-linker domain; that stretch reads AITTAASRLG…LYRGYANSDR (178 aa). Residues 236 to 288 enclose the CpcD-like domain; it reads SKLFRVEITAISAPGYPKVRRSNKAVIVPFEQLNQTLQQINRLGGKVASITPA.

It belongs to the phycobilisome linker protein family. In terms of assembly, part of 2 PBS rod complexes, the conventional CpcG-PBS rod and a photosystem I-specific CpcL-PBS rod, both of which include ferredoxin--NADP reductase (petH). CpcG-PBS has on average 3 stacked phycocyanin hexamers (PC, CpcA and CpcB). Linker CpcG connects the PC stack to the thylakoid, the hexamers are linked by 1 copy of CpcC1, 1 copy of CpcC2 and the stack is terminated by a single copy of CpcD. The CpcL-PBS has on average 5 stacked phycocyanin hexamers (PC, CpcA and CpcB). Linker CpcL connects the PC stack to the thylakoid, the hexamers are linked by 1 copy of CpcC1, 3 copies of CpcC2 and the stack is terminated by a single copy of CpcD.

The protein resides in the cellular thylakoid membrane. In terms of biological role, rod linker protein, connecting hexameric phycocyanin (PC, made by cpcA and cpcB) rods in the phycobilisome (PBS). PC is the major phycobiliprotein in PBS rods. Linker polypeptides determine the state of aggregation and the location of the disk-shaped phycobiliprotein units within the phycobilisome and modulate their spectroscopic properties in order to mediate a directed and optimal energy transfer. This is Phycobilisome 32.1 kDa linker polypeptide, phycocyanin-associated, rod 1 (cpcC1) from Synechocystis sp. (strain ATCC 27184 / PCC 6803 / Kazusa).